The sequence spans 240 residues: MORN repeat-containing protein 3 (240 aa).

Positions 6–35 (CPKKSESLWKGWDRKAQRNGLRSQVYAVNG) are interaction with MDM2. 7 MORN repeats span residues 38–60 (YVGE…KKGA), 62–84 (YEGD…DQQT), 91–113 (YSGW…PKEY), 114–136 (YEGD…NGDI), 137–159 (YEGQ…NGNR), 160–182 (YEGC…DHGQ), and 184–205 (FEGF…GRDE). Residues 76-100 (TLSLPDQQTGKCRRVYSGWWKGDKK) form an interaction with SIRT1 region. The interval 206 to 240 (APEPTQFPIPEVKILDPDGVLAEALAMFRKTEEGD) is interaction with TP53.

Interacts with MEIG1. Interacts with TP53, MDM2 and SIRT1; the interactions mediate post-transcriptional modifications of TP53 by MDM2 and SIRT1.

Its subcellular location is the cytoplasmic vesicle. It localises to the secretory vesicle. The protein localises to the acrosome. In terms of biological role, assembles a suppression complex (suppresome) by tethering SIRT1 and MDM2 to regulate composite modifications of p53/TP53. Confers both deacetylation-mediated functional inactivation, by SIRT1, and ubiquitination-dependent degradation, by MDM2, of p53/TP53, promoting a proliferative and cell survival behaviors. May play a role in the regulation of spermatogenesis. In Homo sapiens (Human), this protein is MORN repeat-containing protein 3.